The chain runs to 370 residues: Ubiquinone biosynthesis O-methyltransferase, mitochondrial (370 aa).

A mitochondrion-targeting transit peptide spans 1 to 86; sequence MWRGGRLGSR…TYRTPWKRLY (86 aa). Arginine 125 contributes to the S-adenosyl-L-methionine binding site. N6-acetyllysine is present on residues lysine 144 and lysine 150. Residues glycine 155 and aspartate 176 each coordinate S-adenosyl-L-methionine. At lysine 197 the chain carries N6-acetyllysine. An S-adenosyl-L-methionine-binding site is contributed by serine 223. Glutamate 224, glutamate 227, and histidine 228 together coordinate Mg(2+). Positions 336 to 370 are disordered; that stretch reads AQEHQEPAESALKGETGALHANTSGSPSVREEQRT.

This sequence belongs to the class I-like SAM-binding methyltransferase superfamily. UbiG/COQ3 family. As to quaternary structure, component of a multi-subunit COQ enzyme complex, composed of at least COQ3, COQ4, COQ5, COQ6, COQ7 and COQ9. It depends on Mg(2+) as a cofactor.

Its subcellular location is the mitochondrion inner membrane. The enzyme catalyses 3,4-dihydroxy-5-(all-trans-decaprenyl)benzoate + S-adenosyl-L-methionine = 4-hydroxy-3-methoxy-5-(all-trans-decaprenyl)benzoate + S-adenosyl-L-homocysteine + H(+). The catalysed reaction is a 3-demethylubiquinone + S-adenosyl-L-methionine = a ubiquinone + S-adenosyl-L-homocysteine. It catalyses the reaction 3-demethylubiquinol-10 + S-adenosyl-L-methionine = ubiquinol-10 + S-adenosyl-L-homocysteine + H(+). The protein operates within cofactor biosynthesis; ubiquinone biosynthesis. Its function is as follows. O-methyltransferase required for two non-consecutive steps during ubiquinone biosynthesis. Catalyzes the 2 O-methylation of 3,4-dihydroxy-5-(all-trans-decaprenyl)benzoic acid into 4-hydroxy-3-methoxy-5-(all-trans-decaprenyl)benzoic acid. Also catalyzes the last step of ubiquinone biosynthesis by mediating methylation of 3-demethylubiquinone into ubiquinone. Also able to mediate the methylation of 3-demethylubiquinol-10 into ubiquinol-10. This is Ubiquinone biosynthesis O-methyltransferase, mitochondrial from Mus musculus (Mouse).